Here is a 69-residue protein sequence, read N- to C-terminus: Protein transport protein Sec61 subunit gamma (69 aa).

The Cytoplasmic portion of the chain corresponds to 1–32 (MDAVDSVVDPLREFAKDSVRLVKRCHKPDRKE). A helical membrane pass occupies residues 33–61 (FTKVAARTAIGFVVMGFVGFFVKLIFIPI). The Extracellular portion of the chain corresponds to 62 to 69 (NNIIVGSG).

Belongs to the SecE/SEC61-gamma family. As to quaternary structure, heterotrimeric complex composed of SEC61-alpha, SEC61-beta and SEC61-gamma.

The protein localises to the endoplasmic reticulum membrane. Necessary for protein translocation in the endoplasmic reticulum. The sequence is that of Protein transport protein Sec61 subunit gamma from Oryza sativa subsp. japonica (Rice).